The sequence spans 425 residues: GTPase Obg (425 aa).

In terms of domain architecture, Obg spans 1 to 158 (MFKDYAKIHV…LWLELELKLL (158 aa)). Residues 159-329 (ADVGLVGFPN…LIYRTYRLLE (171 aa)) enclose the OBG-type G domain. Residues 165 to 172 (GFPNAGKS), 190 to 194 (FTTLE), 212 to 215 (DIPG), 282 to 285 (NKTD), and 310 to 312 (SAL) contribute to the GTP site. Positions 172 and 192 each coordinate Mg(2+). The OCT domain occupies 341–421 (VPDERETDVT…IGRFEFEYSE (81 aa)).

It belongs to the TRAFAC class OBG-HflX-like GTPase superfamily. OBG GTPase family. In terms of assembly, monomer. The cofactor is Mg(2+).

It is found in the cytoplasm. Its function is as follows. An essential GTPase which binds GTP, GDP and possibly (p)ppGpp with moderate affinity, with high nucleotide exchange rates and a fairly low GTP hydrolysis rate. Plays a role in control of the cell cycle, stress response, ribosome biogenesis and in those bacteria that undergo differentiation, in morphogenesis control. The protein is GTPase Obg of Desulforudis audaxviator (strain MP104C).